Consider the following 588-residue polypeptide: Autophagy-related protein 22-1 (588 aa).

The helical transmembrane segment at 35-55 threads the bilayer; sequence YGWAAEVFTVCAMGSFLPITL. Asn-84 carries N-linked (GlcNAc...) asparagine glycosylation. The next 3 membrane-spanning stretches (helical) occupy residues 109-129, 144-164, and 168-188; these read TASF…ILII, LLVS…AVTP, and LLGG…FVLL. An N-linked (GlcNAc...) asparagine glycan is attached at Asn-255. 8 consecutive transmembrane segments (helical) span residues 270–290, 301–321, 365–385, 399–419, 434–454, 471–493, 507–527, and 536–556; these read GIGI…LVIV, LVLF…AFWL, ILLF…VSGT, AALG…AFSW, IIAC…GFIP, FPLG…SFFG, LYAI…GFIT, and AFFF…LVDA.

This sequence belongs to the ATG22 family.

The protein resides in the vacuole membrane. Functionally, vacuolar effluxer which mediate the efflux of amino acids resulting from autophagic degradation. The release of autophagic amino acids allows the maintenance of protein synthesis and viability during nitrogen starvation. The polypeptide is Autophagy-related protein 22-1 (atg22-1) (Emericella nidulans (strain FGSC A4 / ATCC 38163 / CBS 112.46 / NRRL 194 / M139) (Aspergillus nidulans)).